The primary structure comprises 344 residues: tRNA N6-adenosine threonylcarbamoyltransferase (344 aa).

Positions 112 and 116 each coordinate Fe cation. Substrate-binding positions include 135–139, D168, G181, and N271; that span reads LVSGG. Residue D299 coordinates Fe cation.

The protein belongs to the KAE1 / TsaD family. Fe(2+) serves as cofactor.

Its subcellular location is the cytoplasm. It carries out the reaction L-threonylcarbamoyladenylate + adenosine(37) in tRNA = N(6)-L-threonylcarbamoyladenosine(37) in tRNA + AMP + H(+). Its function is as follows. Required for the formation of a threonylcarbamoyl group on adenosine at position 37 (t(6)A37) in tRNAs that read codons beginning with adenine. Is involved in the transfer of the threonylcarbamoyl moiety of threonylcarbamoyl-AMP (TC-AMP) to the N6 group of A37, together with TsaE and TsaB. TsaD likely plays a direct catalytic role in this reaction. This Sphingopyxis alaskensis (strain DSM 13593 / LMG 18877 / RB2256) (Sphingomonas alaskensis) protein is tRNA N6-adenosine threonylcarbamoyltransferase.